A 508-amino-acid polypeptide reads, in one-letter code: Maturase K (508 aa).

The protein belongs to the intron maturase 2 family. MatK subfamily.

It localises to the plastid. The protein resides in the chloroplast. Its function is as follows. Usually encoded in the trnK tRNA gene intron. Probably assists in splicing its own and other chloroplast group II introns. The sequence is that of Maturase K from Chaetosphaeridium globosum (Charophycean green alga).